The primary structure comprises 788 residues: Endonuclease MutS2 (788 aa).

Residue 334 to 341 (GPNTGGKT) coordinates ATP. Residues 713 to 788 (LDLRGQRYEE…GTGATIVYLQ (76 aa)) form the Smr domain.

Belongs to the DNA mismatch repair MutS family. MutS2 subfamily. As to quaternary structure, homodimer. Binds to stalled ribosomes, contacting rRNA.

Functionally, endonuclease that is involved in the suppression of homologous recombination and thus may have a key role in the control of bacterial genetic diversity. Acts as a ribosome collision sensor, splitting the ribosome into its 2 subunits. Detects stalled/collided 70S ribosomes which it binds and splits by an ATP-hydrolysis driven conformational change. Acts upstream of the ribosome quality control system (RQC), a ribosome-associated complex that mediates the extraction of incompletely synthesized nascent chains from stalled ribosomes and their subsequent degradation. Probably generates substrates for RQC. The chain is Endonuclease MutS2 from Lactobacillus johnsonii (strain CNCM I-12250 / La1 / NCC 533).